A 161-amino-acid polypeptide reads, in one-letter code: PHD finger-containing protein 4 (161 aa).

Residues 30-80 (KKPCEVCGSNANDHAIMTCFLCRDTREHIYCARVHLRSVPRMWICEECRMN) form a PHD-type zinc finger. Zn(2+) contacts are provided by cysteine 33, cysteine 36, cysteine 48, cysteine 51, histidine 57, cysteine 60, cysteine 74, and cysteine 77. A compositionally biased stretch (polar residues) spans 114–132 (TMTSSDSGNQISATHQQPP). The tract at residues 114-161 (TMTSSDSGNQISATHQQPPQAHASPVAVPMDTSSSDNQQPPSDSESAI) is disordered. Over residues 146–161 (SSSDNQQPPSDSESAI) the composition is skewed to low complexity.

As to quaternary structure, interacts directly with AIPP3/BDT1.

Functionally, together with AIPP3/BDT1, cooperates to form a BAH-PHD bivalent histone reader complex able to read histone H3 lysine 27 trimethylation (H3K27me3) histone marks in order to regulate transcription, especially to prevent early flowering; promotes AIPP3/BDT1 binding to H3K27me3. The polypeptide is PHD finger-containing protein 4 (Arabidopsis thaliana (Mouse-ear cress)).